We begin with the raw amino-acid sequence, 343 residues long: Thromboxane A2 receptor (343 aa).

Over 1–29 the chain is Extracellular; the sequence is MWPNGSSLGPCFRPTNITLEERRLIASPW. Residues N4 and N16 are each glycosylated (N-linked (GlcNAc...) asparagine). Residues 30–52 form a helical membrane-spanning segment; that stretch reads FAASFCVVGLASNLLALSVLAGA. At 53 to 66 the chain is on the cytoplasmic side; it reads RQGGSHTRSSFLTF. Residues 67–87 form a helical membrane-spanning segment; the sequence is LCGLVLTDFLGLLVTGTIVVS. At 88–106 the chain is on the extracellular side; that stretch reads QHAALFEWHAVDPGCRLCR. A disulfide bond links C105 and C183. Residues 107–128 form a helical membrane-spanning segment; sequence FMGVVMIFFGLSPLLLGAAMAS. Residues 129–149 are Cytoplasmic-facing; sequence ERYLGITRPFSRPAVASQRRA. Residues 150–172 form a helical membrane-spanning segment; the sequence is WATVGLVWAAALALGLLPLLGVG. Over 173 to 193 the chain is Extracellular; the sequence is RYTVQYPGSWCFLTLGAESGD. Residues 194 to 219 traverse the membrane as a helical segment; that stretch reads VAFGLLFSMLGGLSVGLSFLLNTVSV. Residues 220–246 lie on the Cytoplasmic side of the membrane; it reads ATLCHVYHGQEAAQQRPRDSEVEMMAQ. The helical transmembrane segment at 247-270 threads the bilayer; sequence LLGIMVVASVCWLPLLVFIAQTVL. The Extracellular segment spans residues 271–289; it reads RNPPAMSPAGQLSRTTEKE. The chain crosses the membrane as a helical span at residues 290–311; that stretch reads LLIYLRVATWNQILDPWVYILF. Residues 312–343 are Cytoplasmic-facing; sequence RRAVLRRLQPRLSTRPRSLSLQPQLTQRSGLQ. Phosphoserine is present on residues S329 and S331.

The protein belongs to the G-protein coupled receptor 1 family. Interacts with RPGRIP1L. Interacts with PSMA3. Interacts with RACK1; the interaction regulates TBXA2R cell surface expression.

It localises to the cell membrane. In terms of biological role, receptor for thromboxane A2 (TXA2), a potent stimulator of platelet aggregation. The activity of this receptor is mediated by a G-protein that activates a phosphatidylinositol-calcium second messenger system. In the kidney, the binding of TXA2 to glomerular TP receptors causes intense vasoconstriction. Activates phospholipase C. Activates adenylyl cyclase. Functionally, inhibits adenylyl cyclase. This Homo sapiens (Human) protein is Thromboxane A2 receptor (TBXA2R).